We begin with the raw amino-acid sequence, 438 residues long: Battenin (438 aa).

The segment at 1-27 (MGSSAGSWRRLEDSEREETDSEPQAPR) is disordered. The Cytoplasmic segment spans residues 1-37 (MGSSAGSWRRLEDSEREETDSEPQAPRLDSRSVLWKN). S14 is modified (phosphoserine). Residues 38-58 (AVGFWILGLCNNFSYVVMLSA) form a helical membrane-spanning segment. Topologically, residues 59 to 127 (AHDILKQEQA…GLHLLPYSPR (69 aa)) are lumenal. Positions 67 to 87 (QASGNQSHVEPGPTPTPHNSS) are disordered. N-linked (GlcNAc...) asparagine glycosylation is found at N71 and N85. Residues 128–148 (VLVSGVCSAGSFVLVAFSQSV) form a helical membrane-spanning segment. Topologically, residues 149–151 (GLS) are cytoplasmic. Residues 152-172 (LCGVVLASISSGLGEVTFLSL) traverse the membrane as a helical segment. Residues 173 to 182 (TAFYPSAVIS) lie on the Lumenal side of the membrane. A helical transmembrane segment spans residues 183 to 203 (WWSSGTGGAGLLGSLSYLGLT). At 204–277 (QAGLSPQHTL…DLSLQERWTV (74 aa)) the chain is on the cytoplasmic side. Residues 239–261 (PGGENEAETAARQPLIGTETPES) are disordered. The short motif at 242–244 (ENE) is the Lysosomal targeting motif element. The short motif at 253-254 (LI) is the Lysosomal targeting motif. Required for AP1G1, AP2A2 and AP3D1 interaction element. The chain crosses the membrane as a helical span at residues 278-298 (FKGLLWYIIPLVLVYFAEYFI). The Lumenal portion of the chain corresponds to 299-346 (NQGLFELLFFRNTSLSHAQQYRWYQMLYQAGVFASRSSLQCCRIRFTW). N-linked (GlcNAc...) asparagine glycosylation is present at N310. A helical transmembrane segment spans residues 347–367 (VLALLQCLNLALLLADVCLNF). Residues 368-438 (LPSIYLIFII…PLHDFLCHLP (71 aa)) are Cytoplasmic-facing. The Lysosomal targeting motif signature appears at 409-419 (MEAACISDTLG). The residue at position 435 (C435) is a Cysteine methyl ester. C435 is lipidated: S-farnesyl cysteine. Positions 436-438 (HLP) are cleaved as a propeptide — removed in mature form.

The protein belongs to the battenin family. In terms of assembly, homooligomer. Interacts with DCTN1, KIF3A, RAB7A and RILP. Interacts with CLN5. Interacts with KCNIP3. In terms of processing, highly glycosylated. Farnesylation is important for trafficking to lysosomes. In terms of tissue distribution, expressed throughout the brain, such as, in the cerebral cortex, hippocampus, cerebellum and several different cerebral nuclei (at protein level). In the cerebral cortex, expressed in all cortical layers. In the hippocampus, expressed in the granule cells in the dentate gyrus and the pyramidal cells of the hippocampus proper. In the cerebellum expressed in the granular and molecular layers, and in the Purkinje cell layer.

Its subcellular location is the lysosome membrane. It localises to the late endosome. It is found in the lysosome. The protein localises to the membrane raft. The protein resides in the golgi apparatus. Its subcellular location is the trans-Golgi network. It localises to the synapse. It is found in the synaptosome. The protein localises to the early endosome membrane. The protein resides in the late endosome membrane. Its subcellular location is the cytoplasmic vesicle. It localises to the autophagosome. Functionally, mediates microtubule-dependent, anterograde transport connecting the Golgi network, endosomes, autophagosomes, lysosomes and plasma membrane, and participates in several cellular processes such as regulation of lysosomal pH, lysosome protein degradation, receptor-mediated endocytosis, autophagy, transport of proteins and lipids from the TGN, apoptosis and synaptic transmission. Facilitates the proteins transport from trans-Golgi network (TGN)-to other membrane compartments such as transport of microdomain-associated proteins to the plasma membrane, IGF2R transport to the lysosome where it regulates the CTSD release leading to regulation of CTSD maturation and thereby APP intracellular processing. Moreover regulates CTSD activity in response to osmotic stress. Also binds galactosylceramide and transports it from the trans Golgi to the rafts, which may have immediate and downstream effects on cell survival by modulating ceramide synthesis. At the plasma membrane, regulates actin-dependent events including filopodia formation, cell migration, and pinocytosis through ARF1-CDC42 pathway and also the cytoskeleton organization through interaction with MYH10 and fodrin leading to the regulation of the plasma membrane association of Na+, K+ ATPase complex. Regulates synaptic transmission in the amygdala, hippocampus, and cerebellum through regulation of synaptic vesicles density and their proximity to active zones leading to modulation of short-term plasticity and age-dependent anxious behavior, learning and memory. Regulates autophagic vacuoles (AVs) maturation by modulating the trafficking between endocytic and autophagolysosomal/lysosomal compartments, which involves vesicle fusion leading to regulation of degradation process. Also participates in cellular homeostasis of compounds such as, water, ions, amino acids, proteins and lipids in several tissue namely in brain and kidney through regulation of their transport and synthesis. In Mus musculus (Mouse), this protein is Battenin.